Consider the following 323-residue polypeptide: MRALAVVVVATAFAVVAVRGEQCGSQAGGALCPNCLCCSQYGWCGSTSAYCGSGCQSQCSGSCGGGGPTPPSGGGGSGVASIVSRSLFDQMLLHRNDAACPAKNFYTYDAFVAAANAFPSFATTGDAATRKREVAAFLAQTSHETTGGWATAPDGPYSWGYCFKEENNGNVGSDYCVQSSQWPCAAGKKYYGRGPIQISYNYNYGPAGQAIGSNLLSNPDLVASDATVSFKTAFWFWMTPQSPKPSCHAVMTGQWTPNGNDQAAGRVPGYGVVTNIINGGVECGHGADSRVADRIGFYKRYCDMLGVSYGANLDCYNQRPFNS.

The N-terminal stretch at 1 to 20 is a signal peptide; it reads MRALAVVVVATAFAVVAVRG. Residues 21–61 form the Chitin-binding type-1 domain; it reads EQCGSQAGGALCPNCLCCSQYGWCGSTSAYCGSGCQSQCSG. 8 disulfides stabilise this stretch: Cys-23–Cys-38, Cys-32–Cys-44, Cys-35–Cys-63, Cys-37–Cys-51, Cys-55–Cys-59, Cys-100–Cys-162, Cys-176–Cys-184, and Cys-283–Cys-315. Glu-144 serves as the catalytic Proton donor.

The protein belongs to the glycosyl hydrolase 19 family. Chitinase class I subfamily. As to expression, expressed in roots, leaves, sheaths and meristems.

The catalysed reaction is Random endo-hydrolysis of N-acetyl-beta-D-glucosaminide (1-&gt;4)-beta-linkages in chitin and chitodextrins.. Its function is as follows. Hydrolyzes chitin and may play a role in defense against fungal pathogens containing chitin. The sequence is that of Chitinase 1 (Cht1) from Oryza sativa subsp. japonica (Rice).